Here is a 106-residue protein sequence, read N- to C-terminus: Ig kappa-b4 chain C region (106 aa).

One can recognise an Ig-like domain in the interval 6–99; that stretch reads PSVLLFPPSK…VQGSASPIVQ (94 aa). Residues cysteine 27 and cysteine 87 are joined by a disulfide bond. Residues 48 to 64 are compositionally biased toward polar residues; sequence QQSGIENSKTPQSPEDN. Residues 48–67 form a disordered region; it reads QQSGIENSKTPQSPEDNTYS.

The protein is Ig kappa-b4 chain C region (K-BAS) of Oryctolagus cuniculus (Rabbit).